The chain runs to 326 residues: ATP-dependent 6-phosphofructokinase (326 aa).

G14 is a binding site for ATP. 24–28 (RAVVR) is a binding site for ADP. ATP is bound by residues 75–76 (RF) and 105–108 (GNGS). N106 serves as a coordination point for Mg(2+). Position 129 to 131 (129 to 131 (TID)) interacts with substrate. D131 functions as the Proton acceptor in the catalytic mechanism. R158 is an ADP binding site. Substrate-binding positions include R166 and 173–175 (MGR). ADP is bound by residues 189 to 191 (GAE), K215, and 216 to 218 (KSA). Residues E225, R248, and 254-257 (HTQR) contribute to the substrate site.

Belongs to the phosphofructokinase type A (PFKA) family. ATP-dependent PFK group I subfamily. Prokaryotic clade 'B1' sub-subfamily. In terms of assembly, homotetramer. Mg(2+) serves as cofactor.

The protein localises to the cytoplasm. It carries out the reaction beta-D-fructose 6-phosphate + ATP = beta-D-fructose 1,6-bisphosphate + ADP + H(+). It participates in carbohydrate degradation; glycolysis; D-glyceraldehyde 3-phosphate and glycerone phosphate from D-glucose: step 3/4. With respect to regulation, allosterically activated by ADP and other diphosphonucleosides, and allosterically inhibited by phosphoenolpyruvate. Functionally, catalyzes the phosphorylation of D-fructose 6-phosphate to fructose 1,6-bisphosphate by ATP, the first committing step of glycolysis. This chain is ATP-dependent 6-phosphofructokinase, found in Coxiella burnetii (strain RSA 493 / Nine Mile phase I).